A 159-amino-acid chain; its full sequence is Transmembrane protein 42 (159 aa).

Helical transmembrane passes span 37–57 (FWGVFNCLCAGAFGALAAASA), 59–79 (LAFGSEVSMGLCVLGIIVMAS), 100–120 (IASVTVTFSNILSSAFLGYVL), and 124–144 (CQEVLWWGGVFLILCGLTLIH).

The protein localises to the membrane. The protein is Transmembrane protein 42 (TMEM42) of Homo sapiens (Human).